We begin with the raw amino-acid sequence, 464 residues long: L-2-hydroxyglutarate dehydrogenase, mitochondrial (464 aa).

The transit peptide at 1–52 (MWPTLRYVGGVCGLARYCVAGGFLRASGPASGVPGLLCGGGRRSSSTSSFDI) directs the protein to the mitochondrion. An N6-acetyllysine mark is found at lysine 105 and lysine 174.

This sequence belongs to the L2HGDH family. The cofactor is FAD.

It localises to the mitochondrion. The enzyme catalyses (S)-2-hydroxyglutarate + A = 2-oxoglutarate + AH2. This chain is L-2-hydroxyglutarate dehydrogenase, mitochondrial (L2hgdh), found in Mus musculus (Mouse).